The chain runs to 937 residues: Valine--tRNA ligase (937 aa).

The 'HIGH' region motif lies at 44–54; the sequence is PNVTGTLHMGH. Residues 548–552 carry the 'KMSKS' region motif; that stretch reads KMSKS. Lys-551 provides a ligand contact to ATP. Positions 874 to 937 form a coiled coil; it reads AAETARLTKE…KLKAQLLKLA (64 aa).

The protein belongs to the class-I aminoacyl-tRNA synthetase family. ValS type 1 subfamily. As to quaternary structure, monomer.

The protein resides in the cytoplasm. The enzyme catalyses tRNA(Val) + L-valine + ATP = L-valyl-tRNA(Val) + AMP + diphosphate. Catalyzes the attachment of valine to tRNA(Val). As ValRS can inadvertently accommodate and process structurally similar amino acids such as threonine, to avoid such errors, it has a 'posttransfer' editing activity that hydrolyzes mischarged Thr-tRNA(Val) in a tRNA-dependent manner. This Laribacter hongkongensis (strain HLHK9) protein is Valine--tRNA ligase.